Reading from the N-terminus, the 169-residue chain is MTKTDRVCVGAIAGAFGVKGEVRLKSFCTEPTDIASYGPLSTEKGDRSFRVTLTRPVAGGLGARLSDVTTKEEADALRGVGLYVDRARLPSLGDDEFYHADLIGLEVRDTGGALLGRVHAVHNHGAGDILEIAGAVGREGLLLPFTRAVVPTVDLAAGRIVADPPEGLD.

In terms of domain architecture, PRC barrel spans 94-168 (DDEFYHADLI…RIVADPPEGL (75 aa)).

It belongs to the RimM family. Binds ribosomal protein uS19.

It localises to the cytoplasm. In terms of biological role, an accessory protein needed during the final step in the assembly of 30S ribosomal subunit, possibly for assembly of the head region. Essential for efficient processing of 16S rRNA. May be needed both before and after RbfA during the maturation of 16S rRNA. It has affinity for free ribosomal 30S subunits but not for 70S ribosomes. This is Ribosome maturation factor RimM from Cereibacter sphaeroides (strain ATCC 17029 / ATH 2.4.9) (Rhodobacter sphaeroides).